Here is a 31-residue protein sequence, read N- to C-terminus: Cytochrome b6-f complex subunit 6 (31 aa).

The helical transmembrane segment at 4–24 (IFSYIALLLSALVITLTCYIG) threads the bilayer.

It belongs to the PetL family. The 4 large subunits of the cytochrome b6-f complex are cytochrome b6, subunit IV (17 kDa polypeptide, PetD), cytochrome f and the Rieske protein, while the 4 small subunits are PetG, PetL, PetM and PetN. The complex functions as a dimer.

The protein localises to the plastid. It localises to the chloroplast thylakoid membrane. Its function is as follows. Component of the cytochrome b6-f complex, which mediates electron transfer between photosystem II (PSII) and photosystem I (PSI), cyclic electron flow around PSI, and state transitions. PetL is important for photoautotrophic growth as well as for electron transfer efficiency and stability of the cytochrome b6-f complex. This is Cytochrome b6-f complex subunit 6 from Chlorella vulgaris (Green alga).